We begin with the raw amino-acid sequence, 194 residues long: Adenylate kinase (194 aa).

ATP is bound at residue G10 to T15. The segment at S30–V59 is NMP. Residues T31, R36, Q57–V59, G85–R88, and Q92 contribute to the AMP site. The LID stretch occupies residues S126 to D142. R127 contacts ATP. 2 residues coordinate AMP: R139 and R150. A178 lines the ATP pocket.

This sequence belongs to the adenylate kinase family. In terms of assembly, monomer.

It is found in the cytoplasm. The enzyme catalyses AMP + ATP = 2 ADP. The protein operates within purine metabolism; AMP biosynthesis via salvage pathway; AMP from ADP: step 1/1. Catalyzes the reversible transfer of the terminal phosphate group between ATP and AMP. Plays an important role in cellular energy homeostasis and in adenine nucleotide metabolism. The sequence is that of Adenylate kinase from Brucella melitensis biotype 1 (strain ATCC 23456 / CCUG 17765 / NCTC 10094 / 16M).